Reading from the N-terminus, the 549-residue chain is Glucose-6-phosphate isomerase (549 aa).

Glu353 functions as the Proton donor in the catalytic mechanism. Residues His384 and Lys510 contribute to the active site.

The protein belongs to the GPI family.

The protein resides in the cytoplasm. The catalysed reaction is alpha-D-glucose 6-phosphate = beta-D-fructose 6-phosphate. Its pathway is carbohydrate biosynthesis; gluconeogenesis. The protein operates within carbohydrate degradation; glycolysis; D-glyceraldehyde 3-phosphate and glycerone phosphate from D-glucose: step 2/4. Its function is as follows. Catalyzes the reversible isomerization of glucose-6-phosphate to fructose-6-phosphate. This is Glucose-6-phosphate isomerase from Mycolicibacterium smegmatis (Mycobacterium smegmatis).